A 979-amino-acid chain; its full sequence is Pro-apoptotic serine protease NMA111 (979 aa).

The disordered stretch occupies residues 1-20; it reads MTIMNEGKKRSHSSSSDDHL. Positions 65 to 255 are serine protease; that stretch reads VVSIHFAQVA…LPLDRILRAL (191 aa). Residues His-103, Asp-134, and Ser-217 each act as charge relay system in the active site. 2 consecutive PDZ domains span residues 273–361 and 750–836; these read WLLK…RGGT and SILH…VRDG.

Belongs to the peptidase S1C family.

The protein localises to the nucleus. Functionally, nuclear serine protease which mediates apoptosis. The chain is Pro-apoptotic serine protease NMA111 (NMA111) from Candida glabrata (strain ATCC 2001 / BCRC 20586 / JCM 3761 / NBRC 0622 / NRRL Y-65 / CBS 138) (Yeast).